The chain runs to 483 residues: tRNA-2-methylthio-N(6)-dimethylallyladenosine synthase (483 aa).

Residues lysine 31–alanine 148 form the MTTase N-terminal domain. [4Fe-4S] cluster is bound by residues cysteine 40, cysteine 77, cysteine 111, cysteine 192, cysteine 196, and cysteine 199. A Radical SAM core domain is found at arginine 178 to glutamate 410. The 65-residue stretch at aspartate 413–asparagine 477 folds into the TRAM domain.

Belongs to the methylthiotransferase family. MiaB subfamily. In terms of assembly, monomer. Requires [4Fe-4S] cluster as cofactor.

The protein localises to the cytoplasm. It carries out the reaction N(6)-dimethylallyladenosine(37) in tRNA + (sulfur carrier)-SH + AH2 + 2 S-adenosyl-L-methionine = 2-methylsulfanyl-N(6)-dimethylallyladenosine(37) in tRNA + (sulfur carrier)-H + 5'-deoxyadenosine + L-methionine + A + S-adenosyl-L-homocysteine + 2 H(+). In terms of biological role, catalyzes the methylthiolation of N6-(dimethylallyl)adenosine (i(6)A), leading to the formation of 2-methylthio-N6-(dimethylallyl)adenosine (ms(2)i(6)A) at position 37 in tRNAs that read codons beginning with uridine. This chain is tRNA-2-methylthio-N(6)-dimethylallyladenosine synthase, found in Acinetobacter baumannii (strain ACICU).